Here is a 106-residue protein sequence, read N- to C-terminus: ATP-dependent Clp protease adapter protein ClpS (106 aa).

Belongs to the ClpS family. Binds to the N-terminal domain of the chaperone ClpA.

Involved in the modulation of the specificity of the ClpAP-mediated ATP-dependent protein degradation. This is ATP-dependent Clp protease adapter protein ClpS from Escherichia coli O139:H28 (strain E24377A / ETEC).